The following is a 263-amino-acid chain: Chymotrypsinogen B (263 aa).

The N-terminal stretch at 1-18 is a signal peptide; the sequence is MAFLWLVSCFALVGATFG. 5 disulfides stabilise this stretch: Cys-19–Cys-140, Cys-60–Cys-76, Cys-154–Cys-219, Cys-186–Cys-200, and Cys-209–Cys-238. In terms of domain architecture, Peptidase S1 spans 34 to 261; it reads IVNGEDAIPG…LMPWVQEILE (228 aa). The active-site Charge relay system is His-75. Ser-93 bears the Phosphoserine mark. The active-site Charge relay system is the Asp-120. Residue Ser-213 is the Charge relay system of the active site.

Belongs to the peptidase S1 family.

The protein localises to the secreted. It is found in the extracellular space. It carries out the reaction Preferential cleavage: Tyr-|-Xaa, Trp-|-Xaa, Phe-|-Xaa, Leu-|-Xaa.. The polypeptide is Chymotrypsinogen B (Ctrb1) (Mus musculus (Mouse)).